Consider the following 175-residue polypeptide: B9 domain-containing protein 2 (175 aa).

Positions 2–118 (AEVHVIGQII…ACPTWRPLGS (117 aa)) constitute a C2 B9-type domain.

It belongs to the B9D family. Part of the tectonic-like complex (also named B9 complex). Interacts with TUBG1.

Its subcellular location is the cytoplasm. The protein resides in the cytoskeleton. The protein localises to the cilium basal body. It is found in the cilium axoneme. It localises to the nucleus. Its function is as follows. Component of the tectonic-like complex, a complex localized at the transition zone of primary cilia and acting as a barrier that prevents diffusion of transmembrane proteins between the cilia and plasma membranes. The protein is B9 domain-containing protein 2 (B9D2) of Homo sapiens (Human).